Reading from the N-terminus, the 465-residue chain is MRINNLLVCLVLVFSTLSISNANPEHDKWWKPPPRNCDSLSEDQCKAPNSGCKYLPFVSCCGTKKFFCVEDNGNGCGNAPLSCMKDSKTDAIYEIWSSCRPNSPFLYDYQVRNETCDQKLCEASGGVCEWVDPVPCMGTSCCPRYPVCKGGGGGGGPVSPCKNVICPEDYCCQDIHGGAYCVEKPRPPPPKPHHLCKAIKCGRGKECIVKDGKACCVPKPKPPPPPPVLCDAVQCPKGFNCVEFGGTANCVECEEKECEHHHCPPGYDCVVDSHHRPHCQRPNPGSLCRNVTCPYGYVCKAINNLPTCIRNPLPPNYPCRDLHCPSGYSCEIINDLPSCVRETHPGHCKTCHDVNCGSLDCAMVPNKCPRGSRDCCIQIPSCRLPSNSNDDYDNDPNGYDDNENEGDGLSIPCGPIITCKLNEICLLEQSRCAPLCEFVKCSPGTKCVADTTGIPVCLPNGITPY.

An N-terminal signal peptide occupies residues Met-1–Ala-22. The 119-residue stretch at Arg-35–Gly-153 folds into the DSCP-N domain. 7 Follistatin-like domains span residues Pro-160 to Val-182, Leu-195 to Val-217, Leu-229 to Val-251, Glu-257 to Gln-280, Leu-287 to Ile-309, Pro-318 to Val-340, and Leu-435 to Leu-458.

Its function is as follows. May contribute to the structure of the coat at the interface between the middle, cellulosic layer and the outer, electron-dense, proteinaceous layer. This chain is Probable spore coat protein DDB_G0283555, found in Dictyostelium discoideum (Social amoeba).